The sequence spans 213 residues: Glycerol-3-phosphate acyltransferase (213 aa).

Transmembrane regions (helical) follow at residues 3–23 (ILLA…VVVS), 51–71 (KAAI…VWLA), 78–98 (DVAV…PVFF), 115–135 (AVHP…AFFF), and 140–160 (LAAL…FGTP).

Belongs to the PlsY family. In terms of assembly, probably interacts with PlsX.

The protein resides in the cell inner membrane. The catalysed reaction is an acyl phosphate + sn-glycerol 3-phosphate = a 1-acyl-sn-glycero-3-phosphate + phosphate. It participates in lipid metabolism; phospholipid metabolism. Functionally, catalyzes the transfer of an acyl group from acyl-phosphate (acyl-PO(4)) to glycerol-3-phosphate (G3P) to form lysophosphatidic acid (LPA). This enzyme utilizes acyl-phosphate as fatty acyl donor, but not acyl-CoA or acyl-ACP. This chain is Glycerol-3-phosphate acyltransferase, found in Burkholderia cenocepacia (strain ATCC BAA-245 / DSM 16553 / LMG 16656 / NCTC 13227 / J2315 / CF5610) (Burkholderia cepacia (strain J2315)).